The primary structure comprises 552 residues: DNA ligase (552 aa).

Residue Glu-229 participates in ATP binding. Lys-231 (N6-AMP-lysine intermediate) is an active-site residue. 2 residues coordinate ATP: Arg-236 and Glu-283. Glu-283 and Glu-377 together coordinate Mg(2+). Residues Lys-382 and Lys-397 each coordinate ATP.

Belongs to the ATP-dependent DNA ligase family. Interacts with host TOP2A and TOP2B. The cofactor is Mg(2+).

It is found in the host cytoplasm. It catalyses the reaction ATP + (deoxyribonucleotide)n-3'-hydroxyl + 5'-phospho-(deoxyribonucleotide)m = (deoxyribonucleotide)n+m + AMP + diphosphate.. Functionally, DNA ligase that seals nicks in double-stranded DNA during DNA replication, DNA recombination and DNA repair. Recruits cellular topoisomerase II to sites of viral replication and assembly. This Vaccinia virus (strain Ankara) (VACV) protein is DNA ligase (OPG180).